A 74-amino-acid chain; its full sequence is Protein kish-B (74 aa).

Positions M1 to A22 are cleaved as a signal peptide. Over Y23 to G52 the chain is Extracellular. Residues T53 to I73 traverse the membrane as a helical segment. Residue K74 is a topological domain, cytoplasmic.

It belongs to the KISH family.

It is found in the golgi apparatus membrane. In terms of biological role, involved in the early part of the secretory pathway. This chain is Protein kish-B (TMEM167B), found in Bos taurus (Bovine).